Here is a 640-residue protein sequence, read N- to C-terminus: Chaperone protein HtpG (640 aa).

An a; substrate-binding region spans residues 1–343 (MQTAENVEHL…SNDLPLNVSR (343 aa)). Positions 344 to 564 (EILQESKDID…THDMSGNLGR (221 aa)) are b. Residues 565–640 (LLKSAGQKVP…LLLQNILSGK (76 aa)) form a c region.

Belongs to the heat shock protein 90 family. In terms of assembly, homodimer.

It localises to the cytoplasm. Functionally, molecular chaperone. Has ATPase activity. The polypeptide is Chaperone protein HtpG (Nitrosomonas eutropha (strain DSM 101675 / C91 / Nm57)).